Here is an 868-residue protein sequence, read N- to C-terminus: DNA mismatch repair protein MutS (868 aa).

620 to 627 contributes to the ATP binding site; that stretch reads GPNMGGKS.

The protein belongs to the DNA mismatch repair MutS family.

In terms of biological role, this protein is involved in the repair of mismatches in DNA. It is possible that it carries out the mismatch recognition step. This protein has a weak ATPase activity. This Desulforamulus reducens (strain ATCC BAA-1160 / DSM 100696 / MI-1) (Desulfotomaculum reducens) protein is DNA mismatch repair protein MutS.